A 494-amino-acid polypeptide reads, in one-letter code: MSHYLLAIDQGTTSSRAIVFSAQGLPVASCQQEFKQYFPKDGWVEHDGEEIWLTTLQVCRDALARKGLRAADIAAIGITNQRETTLVWDAASGDLIHPAIVWQDRRTADYCAELKAAGHEANVSARTGLLIDPYFSATKLRWILDNVPGARQRAERGELRFGTVDCFLLWRLTGGRSHRTDATNASRTLLFNIHSQDWDEELLALFEIPRSLLPEVLDCAAEFGVSEPSLLGAAIPVLGMAGDQQAALIGQACFQPGMVKSTYGTGCFMIQNTGEQPVTSKNRLLTTVGYRLDGKVSYAVEGSIFVAGAAVQWLRDGIKLIDHAHESEALAIQAGDSNGVYLVPAFTGLGAPYWDPKARGAIFGLTRDTGIKEIVTAGLQSVCYQTRDLLEAMRQDGTPPSALRVDGGMVVNNWMMQFLTDILGVTVERPEVTETTALGVAYMAGLKAGFYRDLDDIASHWHLQRRFAAHMAEERRGELYAGWQNAVRRVRSEA.

Residue T12 coordinates ADP. The ATP site is built by T12, T13, and S14. T12 contacts sn-glycerol 3-phosphate. R16 is an ADP binding site. Sn-glycerol 3-phosphate is bound by residues R82, E83, Y134, and D243. Residues R82, E83, Y134, D243, and Q244 each coordinate glycerol. The ADP site is built by T265 and G308. ATP is bound by residues T265, G308, Q312, and G408. 2 residues coordinate ADP: G408 and N412.

This sequence belongs to the FGGY kinase family.

The catalysed reaction is glycerol + ATP = sn-glycerol 3-phosphate + ADP + H(+). Its pathway is polyol metabolism; glycerol degradation via glycerol kinase pathway; sn-glycerol 3-phosphate from glycerol: step 1/1. Its activity is regulated as follows. Inhibited by fructose 1,6-bisphosphate (FBP). Its function is as follows. Key enzyme in the regulation of glycerol uptake and metabolism. Catalyzes the phosphorylation of glycerol to yield sn-glycerol 3-phosphate. In Pseudomonas aeruginosa (strain ATCC 15692 / DSM 22644 / CIP 104116 / JCM 14847 / LMG 12228 / 1C / PRS 101 / PAO1), this protein is Glycerol kinase 1.